The chain runs to 586 residues: Major facilitator superfamily domain-containing protein 6-like (586 aa).

2 helical membrane passes run Ile50–Ala70 and Met78–Pro98. The tract at residues Gly218–Lys237 is disordered. Polar residues predominate over residues Ser223–Lys237. The next 9 membrane-spanning stretches (helical) occupy residues Pro240–Leu260, Leu284–Gly304, Val318–Phe338, Leu365–Phe385, Glu397–Phe417, Val428–Ile448, Val454–Ala474, Gly494–His514, and Val519–Ile538.

This sequence belongs to the major facilitator superfamily. MFSD6 family.

Its subcellular location is the membrane. In Mus musculus (Mouse), this protein is Major facilitator superfamily domain-containing protein 6-like (Mfsd6l).